We begin with the raw amino-acid sequence, 467 residues long: ESX-4 secretion system protein eccD4 (467 aa).

11 helical membrane-spanning segments follow: residues 122–142 (GALA…RNAL), 152–172 (ATAG…VIAC), 186–206 (VIAT…VPGV), 209–229 (VLVA…ITGC), 241–261 (AVVV…VPAI), 264–284 (LATL…VLLA), 319–339 (LTSL…GTAV), 344–364 (IHRS…LLLL), 374–394 (SLVF…VAAD), 401–421 (PWIA…GFVA), and 439–459 (CLAL…YSAV).

This sequence belongs to the EccD/Snm4 family. As to quaternary structure, part of the ESX-4 / type VII secretion system (T7SS), which is composed of cytosolic and membrane components.

The protein resides in the cell membrane. The sequence is that of ESX-4 secretion system protein eccD4 (eccD4) from Mycobacterium tuberculosis (strain CDC 1551 / Oshkosh).